The following is a 204-amino-acid chain: Guanylate kinase (204 aa).

The region spanning 5–184 is the Guanylate kinase-like domain; the sequence is GLLIVLSGPS…ACDKIKAIVL (180 aa). Position 12–19 (12–19) interacts with ATP; it reads GPSGVGKG.

This sequence belongs to the guanylate kinase family.

Its subcellular location is the cytoplasm. It carries out the reaction GMP + ATP = GDP + ADP. Its function is as follows. Essential for recycling GMP and indirectly, cGMP. The polypeptide is Guanylate kinase (gmk) (Bacillus subtilis (strain 168)).